A 461-amino-acid polypeptide reads, in one-letter code: tRNA modification GTPase MnmE (461 aa).

(6S)-5-formyl-5,6,7,8-tetrahydrofolate contacts are provided by K32, E89, and K128. Residues 224 to 387 (GHALSIVGKP…LSQKISAFFP (164 aa)) form the TrmE-type G domain. Residue N234 coordinates K(+). Residues 234-239 (NAGKSS), 253-259 (SDIKGTT), and 278-281 (DTAG) each bind GTP. Mg(2+) is bound at residue S238. 3 residues coordinate K(+): S253, I255, and T258. T259 contacts Mg(2+). K461 contacts (6S)-5-formyl-5,6,7,8-tetrahydrofolate.

The protein belongs to the TRAFAC class TrmE-Era-EngA-EngB-Septin-like GTPase superfamily. TrmE GTPase family. In terms of assembly, homodimer. Heterotetramer of two MnmE and two MnmG subunits. Requires K(+) as cofactor.

It localises to the cytoplasm. Functionally, exhibits a very high intrinsic GTPase hydrolysis rate. Involved in the addition of a carboxymethylaminomethyl (cmnm) group at the wobble position (U34) of certain tRNAs, forming tRNA-cmnm(5)s(2)U34. This chain is tRNA modification GTPase MnmE, found in Helicobacter pylori (strain ATCC 700392 / 26695) (Campylobacter pylori).